Here is a 453-residue protein sequence, read N- to C-terminus: Flap endonuclease 1 (453 aa).

Positions 1 to 105 (MGIKGLTGLL…SVLAKRFARR (105 aa)) are N-domain. D34 provides a ligand contact to Mg(2+). Residues R47 and R71 each coordinate DNA. 5 residues coordinate Mg(2+): D87, E159, E161, D180, and D182. The I-domain stretch occupies residues 123–254 (DVDKLARRQV…KTALKLMREH (132 aa)). E159 lines the DNA pocket. The DNA site is built by G232 and D234. D234 contributes to the Mg(2+) binding site. 2 disordered regions span residues 273-336 (EEIK…VASS) and 409-453 (RLDG…KSKN). The span at 320 to 333 (KSPKKKAPAKKKKV) shows a compositional bias: basic residues. Residues 406–414 (QQGRLDGFF) form an interaction with PCNA region. Residues 417–446 (KPKEPAAKDTGKGKGKATKGEKRKAEEKGS) are compositionally biased toward basic and acidic residues.

This sequence belongs to the XPG/RAD2 endonuclease family. FEN1 subfamily. As to quaternary structure, interacts with PCNA. Three molecules of FEN1 bind to one PCNA trimer with each molecule binding to one PCNA monomer. PCNA stimulates the nuclease activity without altering cleavage specificity. The cofactor is Mg(2+). In terms of processing, phosphorylated. Phosphorylation upon DNA damage induces relocalization to the nuclear plasma.

It localises to the nucleus. It is found in the nucleolus. The protein localises to the nucleoplasm. The protein resides in the mitochondrion. Functionally, structure-specific nuclease with 5'-flap endonuclease and 5'-3' exonuclease activities involved in DNA replication and repair. During DNA replication, cleaves the 5'-overhanging flap structure that is generated by displacement synthesis when DNA polymerase encounters the 5'-end of a downstream Okazaki fragment. It enters the flap from the 5'-end and then tracks to cleave the flap base, leaving a nick for ligation. Also involved in the long patch base excision repair (LP-BER) pathway, by cleaving within the apurinic/apyrimidinic (AP) site-terminated flap. Acts as a genome stabilization factor that prevents flaps from equilibrating into structures that lead to duplications and deletions. Also possesses 5'-3' exonuclease activity on nicked or gapped double-stranded DNA, and exhibits RNase H activity. Also involved in replication and repair of rDNA and in repairing mitochondrial DNA. The polypeptide is Flap endonuclease 1 (Cryptococcus neoformans var. neoformans serotype D (strain B-3501A) (Filobasidiella neoformans)).